The primary structure comprises 146 residues: Large ribosomal subunit protein uL15 (146 aa).

A compositionally biased stretch (basic and acidic residues) spans Met-1–Arg-13. The segment at Met-1–Gln-54 is disordered. Composition is skewed to gly residues over residues Arg-21–Ala-31 and Ser-42–Gly-52.

It belongs to the universal ribosomal protein uL15 family. Part of the 50S ribosomal subunit.

Binds to the 23S rRNA. The sequence is that of Large ribosomal subunit protein uL15 from Bacillus velezensis (strain DSM 23117 / BGSC 10A6 / LMG 26770 / FZB42) (Bacillus amyloliquefaciens subsp. plantarum).